A 194-amino-acid chain; its full sequence is Imidazoleglycerol-phosphate dehydratase (194 aa).

Belongs to the imidazoleglycerol-phosphate dehydratase family.

Its subcellular location is the cytoplasm. It carries out the reaction D-erythro-1-(imidazol-4-yl)glycerol 3-phosphate = 3-(imidazol-4-yl)-2-oxopropyl phosphate + H2O. It functions in the pathway amino-acid biosynthesis; L-histidine biosynthesis; L-histidine from 5-phospho-alpha-D-ribose 1-diphosphate: step 6/9. The chain is Imidazoleglycerol-phosphate dehydratase from Lacticaseibacillus paracasei (strain ATCC 334 / BCRC 17002 / CCUG 31169 / CIP 107868 / KCTC 3260 / NRRL B-441) (Lactobacillus paracasei).